We begin with the raw amino-acid sequence, 152 residues long: Deoxyuridine 5'-triphosphate nucleotidohydrolase (152 aa).

Residues 72 to 74 (RSG), N85, and 89 to 91 (TID) contribute to the substrate site.

It belongs to the dUTPase family. Mg(2+) serves as cofactor.

The enzyme catalyses dUTP + H2O = dUMP + diphosphate + H(+). It participates in pyrimidine metabolism; dUMP biosynthesis; dUMP from dCTP (dUTP route): step 2/2. Its function is as follows. This enzyme is involved in nucleotide metabolism: it produces dUMP, the immediate precursor of thymidine nucleotides and it decreases the intracellular concentration of dUTP so that uracil cannot be incorporated into DNA. The chain is Deoxyuridine 5'-triphosphate nucleotidohydrolase from Rhodopseudomonas palustris (strain HaA2).